The following is a 95-amino-acid chain: Small ribosomal subunit protein bS18 (95 aa).

Belongs to the bacterial ribosomal protein bS18 family. In terms of assembly, part of the 30S ribosomal subunit. Forms a tight heterodimer with protein bS6.

In terms of biological role, binds as a heterodimer with protein bS6 to the central domain of the 16S rRNA, where it helps stabilize the platform of the 30S subunit. The protein is Small ribosomal subunit protein bS18 of Acidiphilium cryptum (strain JF-5).